Reading from the N-terminus, the 162-residue chain is Phosphopantetheine adenylyltransferase (162 aa).

T10 is a substrate binding site. ATP is bound by residues 10–11 and H18; that span reads TF. K42, L74, and R88 together coordinate substrate. Residues 89–91, E99, and 124–130 each bind ATP; these read GLR and NSFISST.

Belongs to the bacterial CoaD family. Homohexamer. Mg(2+) serves as cofactor.

Its subcellular location is the cytoplasm. The enzyme catalyses (R)-4'-phosphopantetheine + ATP + H(+) = 3'-dephospho-CoA + diphosphate. It participates in cofactor biosynthesis; coenzyme A biosynthesis; CoA from (R)-pantothenate: step 4/5. Its function is as follows. Reversibly transfers an adenylyl group from ATP to 4'-phosphopantetheine, yielding dephospho-CoA (dPCoA) and pyrophosphate. The protein is Phosphopantetheine adenylyltransferase of Alteromonas mediterranea (strain DSM 17117 / CIP 110805 / LMG 28347 / Deep ecotype).